Reading from the N-terminus, the 115-residue chain is Salivary protein gSG6 (115 aa).

The signal sequence occupies residues 1–28 (MAIRVELLLAMVLLPLLLLESVVPHAAA).

Female saliva (at protein level). Distal-lateral lobes of female salivary gland (at protein level). Not detected in male salivary gland (at protein level).

The protein localises to the secreted. Functionally, required for efficient probing and blood feeding. This chain is Salivary protein gSG6, found in Anopheles gambiae (African malaria mosquito).